The primary structure comprises 72 residues: Translation initiation factor IF-1 2 (72 aa).

Positions 1–72 constitute an S1-like domain; sequence MAKEDTIQMQ…SRARIVFRAK (72 aa).

This sequence belongs to the IF-1 family. In terms of assembly, component of the 30S ribosomal translation pre-initiation complex which assembles on the 30S ribosome in the order IF-2 and IF-3, IF-1 and N-formylmethionyl-tRNA(fMet); mRNA recruitment can occur at any time during PIC assembly.

It localises to the cytoplasm. In terms of biological role, one of the essential components for the initiation of protein synthesis. Stabilizes the binding of IF-2 and IF-3 on the 30S subunit to which N-formylmethionyl-tRNA(fMet) subsequently binds. Helps modulate mRNA selection, yielding the 30S pre-initiation complex (PIC). Upon addition of the 50S ribosomal subunit IF-1, IF-2 and IF-3 are released leaving the mature 70S translation initiation complex. This Chromobacterium violaceum (strain ATCC 12472 / DSM 30191 / JCM 1249 / CCUG 213 / NBRC 12614 / NCIMB 9131 / NCTC 9757 / MK) protein is Translation initiation factor IF-1 2.